A 144-amino-acid chain; its full sequence is Large ribosomal subunit protein uL15 (144 aa).

The disordered stretch occupies residues 1–57; sequence MELNNIKPADGAKKDKRRVGRGIGSGLGKTAGRGHKGQKSRAGGFHKVGFEGGQMPM. Residues 21 to 31 show a composition bias toward gly residues; that stretch reads RGIGSGLGKTA.

It belongs to the universal ribosomal protein uL15 family. Part of the 50S ribosomal subunit.

Functionally, binds to the 23S rRNA. This Thiobacillus denitrificans (strain ATCC 25259 / T1) protein is Large ribosomal subunit protein uL15.